Here is a 529-residue protein sequence, read N- to C-terminus: Mannuronan C5-epimerase (529 aa).

A signal peptide spans methionine 1–alanine 30. PbH1 repeat units follow at residues glycine 229–glutamine 256, threonine 291–aspartate 313, serine 315–arginine 338, valine 340–arginine 362, serine 364–glutamate 386, and serine 387–asparagine 409. Histidine 312 serves as the catalytic Proton acceptor.

Belongs to the D-mannuronate C5-epimerase family.

The protein resides in the periplasm. It carries out the reaction [(1-&gt;4)-beta-D-mannuronosyl](n) = [alginate](n). It participates in glycan biosynthesis; alginate biosynthesis. In terms of biological role, catalyzes the epimerization of beta-D-mannuronate to alpha-L-guluronate during the synthesis of the linear polysaccharide alginate. In addition, is part of a periplasmic protein complex that protects alginate from degradation by AlgL by channeling the newly formed alginate polymer through a scaffold that transfers the alginate polymer through the periplasmic space to the outer membrane secretin AlgE. In Pseudomonas fluorescens, this protein is Mannuronan C5-epimerase.